A 412-amino-acid polypeptide reads, in one-letter code: Putative competence-damage inducible protein (412 aa).

This sequence belongs to the CinA family.

The polypeptide is Putative competence-damage inducible protein (Clostridium perfringens (strain SM101 / Type A)).